Reading from the N-terminus, the 241-residue chain is Glucosamine-6-phosphate deaminase (241 aa).

The active-site Proton acceptor; for enolization step is Asp-67. Catalysis depends on Asn-136, which acts as the For ring-opening step. The active-site Proton acceptor; for ring-opening step is the His-138. The active-site For ring-opening step is Glu-143.

It belongs to the glucosamine/galactosamine-6-phosphate isomerase family. NagB subfamily.

The catalysed reaction is alpha-D-glucosamine 6-phosphate + H2O = beta-D-fructose 6-phosphate + NH4(+). Its pathway is amino-sugar metabolism; N-acetylneuraminate degradation; D-fructose 6-phosphate from N-acetylneuraminate: step 5/5. Catalyzes the reversible isomerization-deamination of glucosamine 6-phosphate (GlcN6P) to form fructose 6-phosphate (Fru6P) and ammonium ion. This chain is Glucosamine-6-phosphate deaminase, found in Halothermothrix orenii (strain H 168 / OCM 544 / DSM 9562).